The following is a 260-amino-acid chain: Small ribosomal subunit protein eS1 (260 aa).

Basic residues predominate over residues 1–18 (MAVGKNKRISKGKKGGKK). The segment at 1 to 22 (MAVGKNKRISKGKKGGKKKAAD) is disordered.

This sequence belongs to the eukaryotic ribosomal protein eS1 family. Component of the small ribosomal subunit. Mature ribosomes consist of a small (40S) and a large (60S) subunit. The 40S subunit contains about 33 different proteins and 1 molecule of RNA (18S). The 60S subunit contains about 49 different proteins and 3 molecules of RNA (25S, 5.8S and 5S).

It is found in the cytoplasm. The sequence is that of Small ribosomal subunit protein eS1 from Helianthus annuus (Common sunflower).